We begin with the raw amino-acid sequence, 261 residues long: 1-(5-phosphoribosyl)-5-[(5-phosphoribosylamino)methylideneamino] imidazole-4-carboxamide isomerase (261 aa).

Catalysis depends on Asp-7, which acts as the Proton acceptor. Asp-129 serves as the catalytic Proton donor.

This sequence belongs to the HisA/HisF family.

The protein resides in the cytoplasm. It carries out the reaction 1-(5-phospho-beta-D-ribosyl)-5-[(5-phospho-beta-D-ribosylamino)methylideneamino]imidazole-4-carboxamide = 5-[(5-phospho-1-deoxy-D-ribulos-1-ylimino)methylamino]-1-(5-phospho-beta-D-ribosyl)imidazole-4-carboxamide. The protein operates within amino-acid biosynthesis; L-histidine biosynthesis; L-histidine from 5-phospho-alpha-D-ribose 1-diphosphate: step 4/9. This is 1-(5-phosphoribosyl)-5-[(5-phosphoribosylamino)methylideneamino] imidazole-4-carboxamide isomerase from Colwellia psychrerythraea (strain 34H / ATCC BAA-681) (Vibrio psychroerythus).